Reading from the N-terminus, the 185-residue chain is Prenylated Rab acceptor protein 1 (185 aa).

Over 1-78 the chain is Cytoplasmic; that stretch reads MAAQKDQQKD…RNVEYYQSNY (78 aa). Residues 30 to 54 are required for interaction with prenylated RAB3A and VAMP2; sequence AGREWLERRRATIRPWGSFVDQRRF. 2 helical membrane-spanning segments follow: residues 79 to 94 and 95 to 112; these read VFVF…VTSP and MLLV…ILYL. Residues 113–131 lie on the Cytoplasmic side of the membrane; sequence RTLQSKFVLFGREVSPAHQ. Transmembrane regions (helical) follow at residues 132-148 and 149-165; these read YALA…LAGA and GSAV…VIGS. The tract at residues 165-185 is required for interaction with GDI1; it reads SHAAFHQIEAVDGEELQMEPV. Residues 166–185 are Cytoplasmic-facing; the sequence is HAAFHQIEAVDGEELQMEPV. The tract at residues 175 to 185 is required for interaction with prenylated RAB3A and VAMP2; the sequence is VDGEELQMEPV. A homodimerization region spans residues 175-185; that stretch reads VDGEELQMEPV.

It belongs to the PRA1 family. Homodimer. Interacts with VAMP2 (synaptobrevin-2), prenylated Rab proteins, GDI1, NRDG1 and PCLO.

Its subcellular location is the cell membrane. The protein resides in the cytoplasm. It localises to the golgi apparatus. It is found in the cytoplasmic vesicle. The protein localises to the secretory vesicle. Its subcellular location is the synaptic vesicle. Functionally, general Rab protein regulator required for vesicle formation from the Golgi complex. May control vesicle docking and fusion by mediating the action of Rab GTPases to the SNARE complexes. In addition it inhibits the removal of Rab GTPases from the membrane by GDI1. The polypeptide is Prenylated Rab acceptor protein 1 (RABAC1) (Sus scrofa (Pig)).